The primary structure comprises 445 residues: Hydroxymethylglutaryl-CoA synthase (445 aa).

D31 provides a ligand contact to (3S)-3-hydroxy-3-methylglutaryl-CoA. The active-site Proton donor/acceptor is the E83. Positions 120, 163, 211, 244, 253, 328, and 364 each coordinate (3S)-3-hydroxy-3-methylglutaryl-CoA. C120 acts as the Acyl-thioester intermediate in catalysis. H244 serves as the catalytic Proton donor/acceptor.

The protein belongs to the thiolase-like superfamily. HMG-CoA synthase family.

The catalysed reaction is acetoacetyl-CoA + acetyl-CoA + H2O = (3S)-3-hydroxy-3-methylglutaryl-CoA + CoA + H(+). It functions in the pathway metabolic intermediate biosynthesis; (R)-mevalonate biosynthesis; (R)-mevalonate from acetyl-CoA: step 2/3. With respect to regulation, in contrast to bacterial and eukaryotic HMG-CoA synthases, is insensitive to feedback substrate inhibition by acetoacetyl-CoA. Enzymatic activity is inhibited by hymeglusin, which also blocks the propagation of H.volcanii cells in vivo, indicating the critical role that the mevalonate pathway plays in isoprenoid biosynthesis by these archaea. In terms of biological role, catalyzes the condensation of acetyl-CoA with acetoacetyl-CoA to form 3-hydroxy-3-methylglutaryl-CoA (HMG-CoA). Functions in the mevalonate (MVA) pathway leading to isopentenyl diphosphate (IPP), a key precursor for the biosynthesis of isoprenoid compounds such as archaeal membrane lipids. In Haloferax volcanii (strain ATCC 29605 / DSM 3757 / JCM 8879 / NBRC 14742 / NCIMB 2012 / VKM B-1768 / DS2) (Halobacterium volcanii), this protein is Hydroxymethylglutaryl-CoA synthase (hmgB).